We begin with the raw amino-acid sequence, 431 residues long: Forkhead box protein N2 (431 aa).

The segment at residues 112–208 (KPPYSFSLLI…QALKKQPFSS (97 aa)) is a DNA-binding region (fork-head). A disordered region spans residues 364–387 (DSGYASQPCAKISEKGQSGKKMRK).

The protein resides in the nucleus. Its function is as follows. Binds to the purine-rich region in HTLV-I LTR. This Homo sapiens (Human) protein is Forkhead box protein N2 (FOXN2).